The following is a 687-amino-acid chain: Ataxin-1-like (687 aa).

Residues 1–19 show a composition bias toward basic and acidic residues; sequence MKPVHERSQECLPPKKRDL. Disordered stretches follow at residues 1–46, 185–223, and 261–294; these read MKPV…SEWS, ATPP…LDLA, and SALE…KGES. The tract at residues 20–197 is interaction with NCOR2 and ATXN1; the sequence is PVTSEDMGRT…PPQAASPAQS (178 aa). A self-association region spans residues 20 to 197; it reads PVTSEDMGRT…PPQAASPAQS (178 aa). 2 stretches are compositionally biased toward polar residues: residues 28–43 and 198–219; these read RTTS…SDAS and FNKS…NTQP. Residues 272–283 are compositionally biased toward basic and acidic residues; it reads RQRERNVRRESE. S282 is subject to Phosphoserine. T328 carries the post-translational modification Phosphothreonine. The disordered stretch occupies residues 356-379; it reads DEPSPLNLSHHNLDHQGEGRGSAR. At S359 the chain carries Phosphoserine. An AXH domain is found at 455–586; it reads PPPVTSSHLP…SISLQSLNSN (132 aa). The segment at 587 to 649 is disordered; sequence SVSQASCAPP…PGAQACWPAP (63 aa).

This sequence belongs to the ATXN1 family. As to quaternary structure, homodimer. Interacts (via AXH domain) with NCOR2. Interacts with ATXN1 and CIC. Directly interacts with RBPJ; this interaction is disrupted in the presence of Notch intracellular domain. Competes with ATXN1 for RBPJ-binding. Found in a complex with CIC and ATXN1. As to expression, expressed in the cortex and hypothalamus (at protein level). Expressed in neuronal cells. Highly expressed in Purkinje cells of cerebellum.

It localises to the nucleus. Its subcellular location is the cell projection. It is found in the dendrite. Functionally, chromatin-binding factor that repress Notch signaling in the absence of Notch intracellular domain by acting as a CBF1 corepressor. Binds to the HEY promoter and might assist, along with NCOR2, RBPJ-mediated repression. Can suppress the cytotoxicity of ATXN1 in spinocerebellar ataxia type 1 (SCA1). In concert with CIC and ATXN1, involved in brain development. This chain is Ataxin-1-like (Atxn1l), found in Mus musculus (Mouse).